The primary structure comprises 437 residues: MHDKDVVFTAGPGGRMQGDIRVPGDKSISHRSVMLGSLAEGVTEVSGFLQAEDCLATMAAFRAMGVEIEGPTEGRLRIHGVGLHGLKPPAAPLDLGNSGTSMRLLSGLLAGQAFDTTLTGDASLVRRPMRRVTEPLRAMGARIDTTEAGTAPLRIAGGSRLKGIDYAMPVASAQVKSCLLLAGLYAEGKTCVTEPAPTRDHTERMLAGFGYPVARDGNRVCIQSGGKLSATRIDVPADISSAAFFMIGAAISPGSDVFLRHVGINPTRTGVIEILREMGADIEILAPREVGGEPVADLRIRYRELRGIRIPEHTVPLAIDEFPALFIAAACATGETVLTGAEELRVKESDRIQAMADGLTTLGIDARPTPDGMVIRGGSFRGGAVDSRGDHRIAMSFSIAALRAPIPIEIHDCANVATSFPNFVELARTLGLDIEVS.

Residues K26, S27, and R31 each contribute to the 3-phosphoshikimate site. K26 contributes to the phosphoenolpyruvate binding site. Phosphoenolpyruvate-binding residues include G99 and R127. 3-phosphoshikimate contacts are provided by S172, Q174, D320, and K347. A phosphoenolpyruvate-binding site is contributed by Q174. D320 acts as the Proton acceptor in catalysis. Phosphoenolpyruvate contacts are provided by R351 and R392.

It belongs to the EPSP synthase family. Monomer.

Its subcellular location is the cytoplasm. The catalysed reaction is 3-phosphoshikimate + phosphoenolpyruvate = 5-O-(1-carboxyvinyl)-3-phosphoshikimate + phosphate. It functions in the pathway metabolic intermediate biosynthesis; chorismate biosynthesis; chorismate from D-erythrose 4-phosphate and phosphoenolpyruvate: step 6/7. In terms of biological role, catalyzes the transfer of the enolpyruvyl moiety of phosphoenolpyruvate (PEP) to the 5-hydroxyl of shikimate-3-phosphate (S3P) to produce enolpyruvyl shikimate-3-phosphate and inorganic phosphate. The chain is 3-phosphoshikimate 1-carboxyvinyltransferase from Methylococcus capsulatus (strain ATCC 33009 / NCIMB 11132 / Bath).